The sequence spans 91 residues: Small ribosomal subunit protein bS20 (91 aa).

Residues 1-21 (MPLHKSAEKRLRQSARRNERN) show a composition bias toward basic and acidic residues. Disordered stretches follow at residues 1 to 25 (MPLH…RARK) and 70 to 91 (PNKA…MKAE). The span at 70-79 (PNKASRKKSQ) shows a compositional bias: basic residues.

The protein belongs to the bacterial ribosomal protein bS20 family.

Its function is as follows. Binds directly to 16S ribosomal RNA. In Chlorobium phaeobacteroides (strain BS1), this protein is Small ribosomal subunit protein bS20.